A 219-amino-acid chain; its full sequence is UPF0619 GPI-anchored membrane protein AFUA_3G00880 (219 aa).

Residues 1–16 (MRFALTLTAFVGSVAA) form the signal peptide. The N-linked (GlcNAc...) asparagine glycan is linked to asparagine 85. Disordered regions lie at residues 107-144 (SQQFKVESSGSSTTSDSTSSASATGSASTSSSSTGTVS) and 160-205 (SSTL…SLTV). Over residues 114–144 (SSGSSTTSDSTSSASATGSASTSSSSTGTVS) the composition is skewed to low complexity. Asparagine 198 carries GPI-like-anchor amidated asparagine lipidation. Positions 199 to 219 (GAGSLTVPAGSLLLGLVALAL) are cleaved as a propeptide — removed in mature form.

The protein belongs to the UPF0619 family. In terms of processing, the GPI-like anchor contains a phosphoceramide lipid group. The anchor position has not been determined.

The protein resides in the cell membrane. In Aspergillus fumigatus (strain ATCC MYA-4609 / CBS 101355 / FGSC A1100 / Af293) (Neosartorya fumigata), this protein is UPF0619 GPI-anchored membrane protein AFUA_3G00880.